Here is a 159-residue protein sequence, read N- to C-terminus: Protein-export protein SecB (159 aa).

Belongs to the SecB family. As to quaternary structure, homotetramer, a dimer of dimers. One homotetramer interacts with 1 SecA dimer.

The protein localises to the cytoplasm. Its function is as follows. One of the proteins required for the normal export of preproteins out of the cell cytoplasm. It is a molecular chaperone that binds to a subset of precursor proteins, maintaining them in a translocation-competent state. It also specifically binds to its receptor SecA. The protein is Protein-export protein SecB of Nitrobacter hamburgensis (strain DSM 10229 / NCIMB 13809 / X14).